We begin with the raw amino-acid sequence, 330 residues long: Phosphate acyltransferase (330 aa).

The protein belongs to the PlsX family. As to quaternary structure, homodimer. Probably interacts with PlsY.

The protein localises to the cytoplasm. The enzyme catalyses a fatty acyl-[ACP] + phosphate = an acyl phosphate + holo-[ACP]. Its pathway is lipid metabolism; phospholipid metabolism. Its function is as follows. Catalyzes the reversible formation of acyl-phosphate (acyl-PO(4)) from acyl-[acyl-carrier-protein] (acyl-ACP). This enzyme utilizes acyl-ACP as fatty acyl donor, but not acyl-CoA. This chain is Phosphate acyltransferase, found in Lactobacillus delbrueckii subsp. bulgaricus (strain ATCC BAA-365 / Lb-18).